A 691-amino-acid polypeptide reads, in one-letter code: Pleckstrin homology domain-containing family G member 7 (691 aa).

2 disordered regions span residues 1-48 and 109-140; these read MEKT…ISTS and TSEP…LQPV. The 176-residue stretch at 313–488 folds into the DH domain; the sequence is MIFMNTLRYL…EGKVKWLDNF (176 aa). An N-linked (GlcNAc...) asparagine glycan is attached at Asn395. A PH domain is found at 535-668; sequence HLLYEGKLTL…WMAQITTAIS (134 aa).

The polypeptide is Pleckstrin homology domain-containing family G member 7 (Homo sapiens (Human)).